A 341-amino-acid chain; its full sequence is Anthranilate phosphoribosyltransferase (341 aa).

Residues Gly-85, 88 to 89 (GD), Thr-93, 95 to 98 (NIST), 113 to 121 (KHGNRSASG), and Ser-125 contribute to the 5-phospho-alpha-D-ribose 1-diphosphate site. Gly-85 is an anthranilate binding site. Residue Ser-97 participates in Mg(2+) binding. Asn-116 lines the anthranilate pocket. Residue Arg-171 coordinates anthranilate. Residues Asp-230 and Glu-231 each coordinate Mg(2+).

The protein belongs to the anthranilate phosphoribosyltransferase family. In terms of assembly, homodimer. Mg(2+) serves as cofactor.

It catalyses the reaction N-(5-phospho-beta-D-ribosyl)anthranilate + diphosphate = 5-phospho-alpha-D-ribose 1-diphosphate + anthranilate. Its pathway is amino-acid biosynthesis; L-tryptophan biosynthesis; L-tryptophan from chorismate: step 2/5. Functionally, catalyzes the transfer of the phosphoribosyl group of 5-phosphorylribose-1-pyrophosphate (PRPP) to anthranilate to yield N-(5'-phosphoribosyl)-anthranilate (PRA). This chain is Anthranilate phosphoribosyltransferase, found in Prochlorococcus marinus (strain SARG / CCMP1375 / SS120).